We begin with the raw amino-acid sequence, 161 residues long: SsrA-binding protein (161 aa).

The tract at residues 138–161 is disordered; sequence DKRTDSKEKDWNRDKARIMKSSLR. The segment covering 139-154 has biased composition (basic and acidic residues); it reads KRTDSKEKDWNRDKAR.

This sequence belongs to the SmpB family.

It localises to the cytoplasm. Required for rescue of stalled ribosomes mediated by trans-translation. Binds to transfer-messenger RNA (tmRNA), required for stable association of tmRNA with ribosomes. tmRNA and SmpB together mimic tRNA shape, replacing the anticodon stem-loop with SmpB. tmRNA is encoded by the ssrA gene; the 2 termini fold to resemble tRNA(Ala) and it encodes a 'tag peptide', a short internal open reading frame. During trans-translation Ala-aminoacylated tmRNA acts like a tRNA, entering the A-site of stalled ribosomes, displacing the stalled mRNA. The ribosome then switches to translate the ORF on the tmRNA; the nascent peptide is terminated with the 'tag peptide' encoded by the tmRNA and targeted for degradation. The ribosome is freed to recommence translation, which seems to be the essential function of trans-translation. This Aliivibrio fischeri (strain ATCC 700601 / ES114) (Vibrio fischeri) protein is SsrA-binding protein.